Here is a 236-residue protein sequence, read N- to C-terminus: Putative (5-formylfuran-3-yl)methyl phosphate synthase (236 aa).

Lysine 38 functions as the Schiff-base intermediate with substrate in the catalytic mechanism. Residue lysine 94 is the Proton acceptor of the active site.

It belongs to the MfnB family.

The catalysed reaction is 2 D-glyceraldehyde 3-phosphate = 4-(hydroxymethyl)-2-furancarboxaldehyde phosphate + phosphate + 2 H2O. Its function is as follows. Catalyzes the formation of 4-(hydroxymethyl)-2-furancarboxaldehyde phosphate (4-HFC-P) from two molecules of glyceraldehyde-3-P (GA-3-P). The sequence is that of Putative (5-formylfuran-3-yl)methyl phosphate synthase from Methylorubrum extorquens (Methylobacterium dichloromethanicum).